We begin with the raw amino-acid sequence, 179 residues long: ATP synthase subunit b (179 aa).

The helical transmembrane segment at 27–47 (TAITFLVMLAVLAKFAWGPIV) threads the bilayer.

The protein belongs to the ATPase B chain family. F-type ATPases have 2 components, F(1) - the catalytic core - and F(0) - the membrane proton channel. F(1) has five subunits: alpha(3), beta(3), gamma(1), delta(1), epsilon(1). F(0) has three main subunits: a(1), b(2) and c(10-14). The alpha and beta chains form an alternating ring which encloses part of the gamma chain. F(1) is attached to F(0) by a central stalk formed by the gamma and epsilon chains, while a peripheral stalk is formed by the delta and b chains.

Its subcellular location is the cell inner membrane. Its function is as follows. F(1)F(0) ATP synthase produces ATP from ADP in the presence of a proton or sodium gradient. F-type ATPases consist of two structural domains, F(1) containing the extramembraneous catalytic core and F(0) containing the membrane proton channel, linked together by a central stalk and a peripheral stalk. During catalysis, ATP synthesis in the catalytic domain of F(1) is coupled via a rotary mechanism of the central stalk subunits to proton translocation. Component of the F(0) channel, it forms part of the peripheral stalk, linking F(1) to F(0). The protein is ATP synthase subunit b of Anaeromyxobacter dehalogenans (strain 2CP-C).